Here is a 119-residue protein sequence, read N- to C-terminus: Large ribosomal subunit protein bL20 (119 aa).

This sequence belongs to the bacterial ribosomal protein bL20 family.

Binds directly to 23S ribosomal RNA and is necessary for the in vitro assembly process of the 50S ribosomal subunit. It is not involved in the protein synthesizing functions of that subunit. The sequence is that of Large ribosomal subunit protein bL20 from Shewanella sediminis (strain HAW-EB3).